Here is a 321-residue protein sequence, read N- to C-terminus: Homoserine O-acetyltransferase (321 aa).

Residue cysteine 142 is the Acyl-thioester intermediate of the active site. Positions 163 and 192 each coordinate substrate. Histidine 235 (proton acceptor) is an active-site residue. The active site involves glutamate 237. Residue arginine 249 coordinates substrate.

Belongs to the MetA family.

Its subcellular location is the cytoplasm. It carries out the reaction L-homoserine + acetyl-CoA = O-acetyl-L-homoserine + CoA. It functions in the pathway amino-acid biosynthesis; L-methionine biosynthesis via de novo pathway; O-acetyl-L-homoserine from L-homoserine: step 1/1. In terms of biological role, transfers an acetyl group from acetyl-CoA to L-homoserine, forming acetyl-L-homoserine. The sequence is that of Homoserine O-acetyltransferase from Lactococcus lactis subsp. lactis (strain IL1403) (Streptococcus lactis).